A 954-amino-acid polypeptide reads, in one-letter code: Glycine dehydrogenase (decarboxylating) (954 aa).

K704 carries the post-translational modification N6-(pyridoxal phosphate)lysine.

It belongs to the GcvP family. In terms of assembly, the glycine cleavage system is composed of four proteins: P, T, L and H. The cofactor is pyridoxal 5'-phosphate.

It carries out the reaction N(6)-[(R)-lipoyl]-L-lysyl-[glycine-cleavage complex H protein] + glycine + H(+) = N(6)-[(R)-S(8)-aminomethyldihydrolipoyl]-L-lysyl-[glycine-cleavage complex H protein] + CO2. In terms of biological role, the glycine cleavage system catalyzes the degradation of glycine. The P protein binds the alpha-amino group of glycine through its pyridoxal phosphate cofactor; CO(2) is released and the remaining methylamine moiety is then transferred to the lipoamide cofactor of the H protein. This chain is Glycine dehydrogenase (decarboxylating), found in Sinorhizobium medicae (strain WSM419) (Ensifer medicae).